Consider the following 157-residue polypeptide: Protein EOLA1 (157 aa).

The ASCH domain maps to 6-92 (LSFRQPYAGL…IAGLIDIGET (87 aa)).

It belongs to the EOLA family. Interacts with MT2A.

In terms of biological role, may play a role in cell protection during the inflammatory response. In epithelial cells, negatively regulates IL6 production and apoptosis through the regulation of MT2A expression. This Mus musculus (Mouse) protein is Protein EOLA1.